A 197-amino-acid chain; its full sequence is MKKRRSKKERQALLQQTIETNPFITDEDLAERFQVSIQTVRLDRMELSIPELRERIKHVATKNHEENVKSLPLEEIVGEIIDIELDRHAISIFEVKLEHVFQRNQIARGHHLFAQANSLAVAVIDEDLALTAKSTIRYIRPVKLGERVVAKARVEDVENDKGRTIVKVRSFVGEELVFTGTFEMYRSSNYSEEGNSL.

It belongs to the FapR family.

Transcriptional factor involved in regulation of membrane lipid biosynthesis by repressing genes involved in fatty acid and phospholipid metabolism. The chain is Transcription factor FapR from Bacillus cytotoxicus (strain DSM 22905 / CIP 110041 / 391-98 / NVH 391-98).